Reading from the N-terminus, the 912-residue chain is Protein translocase subunit SecA (912 aa).

ATP is bound by residues Q87, 105–109, and D508; that span reads GEGKT. The interval 869–912 is disordered; that stretch reads EQMQGGNAPVPVSQVTRDEPKVGRNDPCPCGSGKKYKHCHGQLS. C896, C898, C907, and H908 together coordinate Zn(2+). Positions 902–912 are enriched in basic residues; that stretch reads KKYKHCHGQLS.

The protein belongs to the SecA family. In terms of assembly, monomer and homodimer. Part of the essential Sec protein translocation apparatus which comprises SecA, SecYEG and auxiliary proteins SecDF-YajC and YidC. Zn(2+) is required as a cofactor.

The protein localises to the cell inner membrane. It localises to the cytoplasm. It catalyses the reaction ATP + H2O + cellular proteinSide 1 = ADP + phosphate + cellular proteinSide 2.. Functionally, part of the Sec protein translocase complex. Interacts with the SecYEG preprotein conducting channel. Has a central role in coupling the hydrolysis of ATP to the transfer of proteins into and across the cell membrane, serving both as a receptor for the preprotein-SecB complex and as an ATP-driven molecular motor driving the stepwise translocation of polypeptide chains across the membrane. The chain is Protein translocase subunit SecA from Xanthomonas axonopodis pv. citri (strain 306).